The following is a 107-amino-acid chain: Phosphoribosyl-ATP pyrophosphatase (107 aa).

The protein belongs to the PRA-PH family.

It is found in the cytoplasm. The catalysed reaction is 1-(5-phospho-beta-D-ribosyl)-ATP + H2O = 1-(5-phospho-beta-D-ribosyl)-5'-AMP + diphosphate + H(+). It participates in amino-acid biosynthesis; L-histidine biosynthesis; L-histidine from 5-phospho-alpha-D-ribose 1-diphosphate: step 2/9. In Zymomonas mobilis subsp. mobilis (strain ATCC 31821 / ZM4 / CP4), this protein is Phosphoribosyl-ATP pyrophosphatase.